The following is a 234-amino-acid chain: Adenosine 5'-phosphosulfate reductase (234 aa).

4 residues coordinate [4Fe-4S] cluster: cysteine 120, cysteine 121, cysteine 203, and cysteine 206. Cysteine 229 acts as the Nucleophile; cysteine thiosulfonate intermediate in catalysis.

Belongs to the PAPS reductase family. CysH subfamily. It depends on [4Fe-4S] cluster as a cofactor.

The protein resides in the cytoplasm. The catalysed reaction is [thioredoxin]-disulfide + sulfite + AMP + 2 H(+) = adenosine 5'-phosphosulfate + [thioredoxin]-dithiol. It participates in sulfur metabolism; hydrogen sulfide biosynthesis; sulfite from sulfate. In terms of biological role, catalyzes the formation of sulfite from adenosine 5'-phosphosulfate (APS) using thioredoxin as an electron donor. This Bacillus thuringiensis (strain Al Hakam) protein is Adenosine 5'-phosphosulfate reductase.